The primary structure comprises 222 residues: Peptide methionine sulfoxide reductase MsrA (222 aa).

Cys-54 is an active-site residue.

It belongs to the MsrA Met sulfoxide reductase family.

The enzyme catalyses L-methionyl-[protein] + [thioredoxin]-disulfide + H2O = L-methionyl-(S)-S-oxide-[protein] + [thioredoxin]-dithiol. The catalysed reaction is [thioredoxin]-disulfide + L-methionine + H2O = L-methionine (S)-S-oxide + [thioredoxin]-dithiol. Functionally, has an important function as a repair enzyme for proteins that have been inactivated by oxidation. Catalyzes the reversible oxidation-reduction of methionine sulfoxide in proteins to methionine. The protein is Peptide methionine sulfoxide reductase MsrA of Methylococcus capsulatus (strain ATCC 33009 / NCIMB 11132 / Bath).